A 260-amino-acid polypeptide reads, in one-letter code: 3'-5' ssDNA/RNA exonuclease TatD (260 aa).

3 residues coordinate a divalent metal cation: E91, H127, and H152.

Belongs to the metallo-dependent hydrolases superfamily. TatD-type hydrolase family. TatD subfamily. Monomer. Mg(2+) serves as cofactor.

Its subcellular location is the cytoplasm. In terms of biological role, 3'-5' exonuclease that prefers single-stranded DNA and RNA. May play a role in the H(2)O(2)-induced DNA damage repair. The protein is 3'-5' ssDNA/RNA exonuclease TatD of Enterobacter sp. (strain 638).